We begin with the raw amino-acid sequence, 56 residues long: Large ribosomal subunit protein bL33 (56 aa).

Belongs to the bacterial ribosomal protein bL33 family.

This Histophilus somni (strain 129Pt) (Haemophilus somnus) protein is Large ribosomal subunit protein bL33.